A 1082-amino-acid polypeptide reads, in one-letter code: TNF receptor-associated factor homolog 1b (1082 aa).

The interval 1 to 54 (MAEAVDEDSGVGRSLEESSNGQHSQAGEALSEWRSSGQVENGTPSTSPSYWDID) is disordered. An N-acetylalanine modification is found at Ala-2. Residues 33–49 (WRSSGQVENGTPSTSPS) show a composition bias toward polar residues. Positions 67–198 (YGQYTWKIPK…SGCLTIEAKV (132 aa)) constitute an MATH domain. 6 disordered regions span residues 358–388 (LPPK…ERDE), 440–666 (TEQR…SNVG), 697–762 (SIVN…QVVL), 780–800 (LSAP…APII), 812–841 (SSVQ…NQQT), and 858–889 (SSSS…PTSS). Composition is skewed to basic and acidic residues over residues 359-388 (PPKD…ERDE) and 440-453 (TEQR…EREK). Residues 446 to 507 (RGAAEREKKS…EEEKDSVTEK (62 aa)) are a coiled coil. Residues 454-471 (KSKKKQAKQKRNKNKGKD) are compositionally biased toward basic residues. A compositionally biased stretch (basic and acidic residues) spans 472-488 (KRKEEKVSFATHAKDLE). Composition is skewed to low complexity over residues 519–534 (GDVS…SADI) and 560–573 (SSEG…ISIS). Polar residues-rich tracts occupy residues 588-630 (DDSS…QQVK) and 645-666 (QPST…SNVG). Composition is skewed to low complexity over residues 858-871 (SSSS…SSHG) and 878-889 (PSSSYSQAPTSS).

Forms homooligomers. Interacts with SNC1, RPS2 and CPR1/CPR30. Interacts with ATG6.

The protein resides in the cytoplasm. Its subcellular location is the cell membrane. Its function is as follows. Functions redundantly with TRAF1A in the regulation of plant immune response. Contributes to the turnover of the nucleotide-binding domain and leucine-rich repeat-containing (NB-LRR) immune receptors SNC1 and RPS2. May associate with an E3 ubiquitin-protein ligase complex, which modulates ubiquitination and subsequent degradation of NB-LRR immune sensors to maintain their homeostasis. Functions redundantly with TRAF1A in the regulation of autophagosome formation. Required for SINAT1- and SINAT2-mediated ubiquitination and destabilization of ATG6. Functions as a molecular adapter that helps to regulate autophagy by modulating ATG6 stability. The polypeptide is TNF receptor-associated factor homolog 1b (Arabidopsis thaliana (Mouse-ear cress)).